The following is an 89-amino-acid chain: Small ribosomal subunit protein uS15 (89 aa).

The protein belongs to the universal ribosomal protein uS15 family. Part of the 30S ribosomal subunit. Forms a bridge to the 50S subunit in the 70S ribosome, contacting the 23S rRNA.

Functionally, one of the primary rRNA binding proteins, it binds directly to 16S rRNA where it helps nucleate assembly of the platform of the 30S subunit by binding and bridging several RNA helices of the 16S rRNA. Forms an intersubunit bridge (bridge B4) with the 23S rRNA of the 50S subunit in the ribosome. This is Small ribosomal subunit protein uS15 from Phocaeicola vulgatus (strain ATCC 8482 / DSM 1447 / JCM 5826 / CCUG 4940 / NBRC 14291 / NCTC 11154) (Bacteroides vulgatus).